The sequence spans 184 residues: Ribosome-recycling factor (184 aa).

The protein belongs to the RRF family.

The protein localises to the cytoplasm. Responsible for the release of ribosomes from messenger RNA at the termination of protein biosynthesis. May increase the efficiency of translation by recycling ribosomes from one round of translation to another. This chain is Ribosome-recycling factor, found in Psychrobacter arcticus (strain DSM 17307 / VKM B-2377 / 273-4).